Consider the following 147-residue polypeptide: Large ribosomal subunit protein bL9 (147 aa).

Belongs to the bacterial ribosomal protein bL9 family.

Its function is as follows. Binds to the 23S rRNA. The chain is Large ribosomal subunit protein bL9 from Mycoplasma capricolum subsp. capricolum (strain California kid / ATCC 27343 / NCTC 10154).